Consider the following 449-residue polypeptide: Tubulin alpha-8 chain (449 aa).

The MREC motif motif lies at 1–4 (MREC). Q11, E71, S140, G144, T145, T179, N206, and N228 together coordinate GTP. Position 71 (E71) interacts with Mg(2+). E254 is a catalytic residue.

Belongs to the tubulin family. In terms of assembly, dimer of alpha and beta chains. A typical microtubule is a hollow water-filled tube with an outer diameter of 25 nm and an inner diameter of 15 nM. Alpha-beta heterodimers associate head-to-tail to form protofilaments running lengthwise along the microtubule wall with the beta-tubulin subunit facing the microtubule plus end conferring a structural polarity. Microtubules usually have 13 protofilaments but different protofilament numbers can be found in some organisms and specialized cells. Mg(2+) serves as cofactor. In terms of processing, some glutamate residues at the C-terminus are polyglycylated, resulting in polyglycine chains on the gamma-carboxyl group. Glycylation is mainly limited to tubulin incorporated into axonemes (cilia and flagella) whereas glutamylation is prevalent in neuronal cells, centrioles, axonemes, and the mitotic spindle. Both modifications can coexist on the same protein on adjacent residues, and lowering polyglycylation levels increases polyglutamylation, and reciprocally. Cilia and flagella glycylation is required for their stability and maintenance. Flagella glycylation controls sperm motility. Post-translationally, some glutamate residues at the C-terminus are polyglutamylated, resulting in polyglutamate chains on the gamma-carboxyl group. Polyglutamylation plays a key role in microtubule severing by spastin (SPAST). SPAST preferentially recognizes and acts on microtubules decorated with short polyglutamate tails: severing activity by SPAST increases as the number of glutamates per tubulin rises from one to eight, but decreases beyond this glutamylation threshold. Glutamylation is also involved in cilia motility. The C-terminal phenylalanine residue is cleaved by MATCAP1/KIAA0895L.

The protein localises to the cytoplasm. The protein resides in the cytoskeleton. The enzyme catalyses GTP + H2O = GDP + phosphate + H(+). Its function is as follows. Tubulin is the major constituent of microtubules, a cylinder consisting of laterally associated linear protofilaments composed of alpha- and beta-tubulin heterodimers. Microtubules grow by the addition of GTP-tubulin dimers to the microtubule end, where a stabilizing cap forms. Below the cap, tubulin dimers are in GDP-bound state, owing to GTPase activity of alpha-tubulin. In Rattus norvegicus (Rat), this protein is Tubulin alpha-8 chain (Tuba8).